We begin with the raw amino-acid sequence, 178 residues long: Putative adenylate kinase (178 aa).

5 residues coordinate ATP: Gly-10, Gly-12, Lys-13, Ser-14, and Ser-15. Positions 29-50 (TVVELAEKHGCIIDEEDGEIVI) are NMP. Residues 94-104 (GRNWSEEKLLE) form an LID region. Arg-95 is a binding site for ATP.

The protein belongs to the adenylate kinase family. AK6 subfamily. Interacts with uS11. Not a structural component of 40S pre-ribosomes, but transiently interacts with them by binding to uS11.

The catalysed reaction is AMP + ATP = 2 ADP. The enzyme catalyses ATP + H2O = ADP + phosphate + H(+). Its function is as follows. Broad-specificity nucleoside monophosphate (NMP) kinase that catalyzes the reversible transfer of the terminal phosphate group between nucleoside triphosphates and monophosphates. Also has ATPase activity. Involved in the late maturation steps of the 30S ribosomal particles, specifically 16S rRNA maturation. While NMP activity is not required for ribosome maturation, ATPase activity is. Associates transiently with small ribosomal subunit protein uS11. ATP hydrolysis breaks the interaction with uS11. May temporarily remove uS11 from the ribosome to enable a conformational change of the ribosomal RNA that is needed for the final maturation step of the small ribosomal subunit. The polypeptide is Putative adenylate kinase (Archaeoglobus fulgidus (strain ATCC 49558 / DSM 4304 / JCM 9628 / NBRC 100126 / VC-16)).